The chain runs to 1168 residues: TBC1 domain family member 1 (1168 aa).

S146 bears the Phosphoserine mark. Residues 203–238 are disordered; that stretch reads VSGSRGSESPRPNPPHAAPTGSQEPVRRPMRKSFSQ. Position 235 is a phosphoserine; by PKB/AKT1 (S235). Position 237 is a phosphoserine (S237). Residues 246 to 404 enclose the PID domain; the sequence is FRKELQDGGL…LHKLCERIEG (159 aa). Position 503 is a phosphoserine (S503). A Phosphothreonine; by PKB/AKT1 modification is found at T505. S507, S525, and S527 each carry phosphoserine. A compositionally biased stretch (low complexity) spans 532–542; sequence SSLSSTLSNTS. 2 disordered regions span residues 532 to 551 and 564 to 587; these read SSLSSTLSNTSKEPSVCEKE and GSSEDLSSDSESHLPEEPAPLSPQ. Phosphoserine is present on residues S565, S566, S570, S571, and S585. At T596 the chain carries Phosphothreonine. Position 614 is a phosphoserine (S614). The residue at position 627 (S627) is a Phosphoserine; by PKB/AKT1. Disordered regions lie at residues 628-658 and 678-717; these read VSTETPHERKDFESKANHLGDSGGTPVKTRR and SSSRYEDYSELGELPPRSPLEPVCEDGPFGPPPEEKKRTS. A compositionally biased stretch (basic and acidic residues) spans 632-645; that stretch reads TPHERKDFESKANH. Phosphoserine occurs at positions 695 and 941. In terms of domain architecture, Rab-GAP TBC spans 800 to 994; the sequence is GVPRHHRGEI…RVFDMIFLQG (195 aa). Residue Y952 is modified to Phosphotyrosine. T1131 is modified (phosphothreonine). Positions 1145-1159 are enriched in basic and acidic residues; sequence ELRRRSAEPSDREPE. The tract at residues 1145 to 1168 is disordered; that stretch reads ELRRRSAEPSDREPECTQPEPTGD.

Interacts with APPL2 (via BAR domain); interaction is dependent of TBC1D1 phosphorylation at Ser-235; interaction diminishes the phosphorylation of TBC1D1 at Thr-596, resulting in inhibition of SLC2A4/GLUT4 translocation and glucose uptake. In terms of processing, insulin-stimulated phosphorylation by AKT family kinases stimulates SLC2A4/GLUT4 translocation.

It localises to the nucleus. Functionally, may act as a GTPase-activating protein for Rab family protein(s). May play a role in the cell cycle and differentiation of various tissues. Involved in the trafficking and translocation of GLUT4-containing vesicles and insulin-stimulated glucose uptake into cells. In Homo sapiens (Human), this protein is TBC1 domain family member 1 (TBC1D1).